Here is a 376-residue protein sequence, read N- to C-terminus: 23S rRNA (uracil(747)-C(5))-methyltransferase RlmC (376 aa).

Residues Cys3, Cys11, Cys14, and Cys88 each contribute to the [4Fe-4S] cluster site. S-adenosyl-L-methionine contacts are provided by Gln213, Phe242, Glu263, and Asn308. Cys335 functions as the Nucleophile in the catalytic mechanism.

This sequence belongs to the class I-like SAM-binding methyltransferase superfamily. RNA M5U methyltransferase family. RlmC subfamily.

It carries out the reaction uridine(747) in 23S rRNA + S-adenosyl-L-methionine = 5-methyluridine(747) in 23S rRNA + S-adenosyl-L-homocysteine + H(+). Functionally, catalyzes the formation of 5-methyl-uridine at position 747 (m5U747) in 23S rRNA. The sequence is that of 23S rRNA (uracil(747)-C(5))-methyltransferase RlmC from Vibrio vulnificus (strain YJ016).